The sequence spans 199 residues: NADH-ubiquinone oxidoreductase chain 6 (199 aa).

The next 5 membrane-spanning stretches (helical) occupy residues 1–21 (MILF…VIRA), 27–47 (SVLF…LLGL), 49–69 (FFAM…FLFV), 87–107 (YLPV…LMVD), and 150–170 (FFLF…AIVL).

It belongs to the complex I subunit 6 family.

It is found in the mitochondrion membrane. The catalysed reaction is a ubiquinone + NADH + 5 H(+)(in) = a ubiquinol + NAD(+) + 4 H(+)(out). Its function is as follows. Core subunit of the mitochondrial membrane respiratory chain NADH dehydrogenase (Complex I) that is believed to belong to the minimal assembly required for catalysis. Complex I functions in the transfer of electrons from NADH to the respiratory chain. The immediate electron acceptor for the enzyme is believed to be ubiquinone. This chain is NADH-ubiquinone oxidoreductase chain 6 (ND6), found in Marchantia polymorpha (Common liverwort).